The primary structure comprises 332 residues: Protein pelota homolog (332 aa).

Belongs to the eukaryotic release factor 1 family. Pelota subfamily. In terms of assembly, monomer. A divalent metal cation serves as cofactor.

Its subcellular location is the cytoplasm. In terms of biological role, may function in recognizing stalled ribosomes, interact with stem-loop structures in stalled mRNA molecules, and effect endonucleolytic cleavage of the mRNA. May play a role in the release non-functional ribosomes and degradation of damaged mRNAs. Has endoribonuclease activity. The chain is Protein pelota homolog from Pyrobaculum aerophilum (strain ATCC 51768 / DSM 7523 / JCM 9630 / CIP 104966 / NBRC 100827 / IM2).